The following is a 119-amino-acid chain: Ribonuclease P protein component (119 aa).

Belongs to the RnpA family. Consists of a catalytic RNA component (M1 or rnpB) and a protein subunit.

The catalysed reaction is Endonucleolytic cleavage of RNA, removing 5'-extranucleotides from tRNA precursor.. RNaseP catalyzes the removal of the 5'-leader sequence from pre-tRNA to produce the mature 5'-terminus. It can also cleave other RNA substrates such as 4.5S RNA. The protein component plays an auxiliary but essential role in vivo by binding to the 5'-leader sequence and broadening the substrate specificity of the ribozyme. In Escherichia coli O6:H1 (strain CFT073 / ATCC 700928 / UPEC), this protein is Ribonuclease P protein component.